The following is a 977-amino-acid chain: Mineralocorticoid receptor (977 aa).

Residues 1–19 show a composition bias toward basic and acidic residues; it reads METKGYHSRPEGLDMERRW. Disordered stretches follow at residues 1–37 and 231–288; these read METK…AERT and QGTP…VSSP. Residues 1-601 are modulating; the sequence is METKGYHSRP…STGSSRPSKI (601 aa). The span at 231–243 shows a compositional bias: polar residues; it reads QGTPLTCSPTVDN. Phosphoserine is present on residues S250, S259, S283, S287, and S299. Over residues 259 to 288 the composition is skewed to low complexity; the sequence is SPLSSPLSSMKSPISSPPSHCSVKSPVSSP. Disordered stretches follow at residues 305-327 and 344-368; these read NSRC…SPAA and SGAS…KGAH. Residues C602, C605, C619, C622, C638, C644, C654, and C657 each contribute to the Zn(2+) site. NR C4-type zinc fingers lie at residues 602 to 622 and 638 to 662; these read CLVC…CGSC and CAGR…LQKC. A DNA-binding region (nuclear receptor) is located at residues 602 to 667; the sequence is CLVCGDGASG…RLQKCLQAGM (66 aa). Positions 668–718 are hinge; the sequence is NLGARKSKKLGKLKGLHEEQPQQPPPPQSPEEGTTYIAPAKEPSVNTALVP. Residues 682-703 are disordered; that stretch reads GLHEEQPQQPPPPQSPEEGTTY. The 239-residue stretch at 719–957 folds into the NR LBD domain; it reads QLSSISRALT…EFPAMLVEII (239 aa). Residues N763 and Q769 each contribute to the 21-hydroxyprogesterone site. Aldosterone contacts are provided by N763 and Q769. N763 and Q769 together coordinate progesterone. Positions 775–778 are important for coactivator binding; that stretch reads KWAK. 21-hydroxyprogesterone is bound by residues R810 and T938. Residues R810 and T938 each coordinate aldosterone. Progesterone is bound by residues R810 and T938.

The protein belongs to the nuclear hormone receptor family. NR3 subfamily.

Its subcellular location is the cytoplasm. It is found in the nucleus. Its function is as follows. Receptor for both mineralocorticoids (MC) such as aldosterone and glucocorticoids (GC) such as corticosterone or cortisol. Binds to mineralocorticoid response elements (MRE) and transactivates target genes. The effect of MC is to increase ion and water transport and thus raise extracellular fluid volume and blood pressure and lower potassium levels. In Tupaia belangeri (Common tree shrew), this protein is Mineralocorticoid receptor (NR3C2).